A 356-amino-acid polypeptide reads, in one-letter code: Hyaluronan and proteoglycan link protein 1 (356 aa).

The propeptide occupies 1-9 (MRSLLLLVL). The Ig-like V-type domain maps to 40-154 (PRLLVEAEQA…EGLEDDTAVV (115 aa)). Asparagine 58 carries N-linked (GlcNAc...) asparagine glycosylation. Intrachain disulfides connect cysteine 63/cysteine 141, cysteine 183/cysteine 254, cysteine 207/cysteine 228, cysteine 281/cysteine 351, and cysteine 306/cysteine 327. Link domains lie at 161–256 (VVFP…FCFT) and 261–353 (GRFY…YCFR).

Belongs to the HAPLN family. Ubiquitously expressed.

It is found in the secreted. It localises to the extracellular space. The protein localises to the extracellular matrix. Functionally, stabilizes the aggregates of proteoglycan monomers with hyaluronic acid in the extracellular cartilage matrix. The chain is Hyaluronan and proteoglycan link protein 1 (Hapln1) from Mus musculus (Mouse).